Reading from the N-terminus, the 320-residue chain is Lipoyl synthase (320 aa).

Residues 1 to 11 show a composition bias toward polar residues; that stretch reads MGGMNDLSSTP. Residues 1–24 form a disordered region; sequence MGGMNDLSSTPAPEGDRPARQRKP. Residues 14-24 are compositionally biased toward basic and acidic residues; it reads EGDRPARQRKP. 7 residues coordinate [4Fe-4S] cluster: C53, C58, C64, C79, C83, C86, and S293. Residues 65–282 enclose the Radical SAM core domain; sequence WTKKHATVMI…GAIARAKGFL (218 aa).

Belongs to the radical SAM superfamily. Lipoyl synthase family. The cofactor is [4Fe-4S] cluster.

The protein localises to the cytoplasm. The catalysed reaction is [[Fe-S] cluster scaffold protein carrying a second [4Fe-4S](2+) cluster] + N(6)-octanoyl-L-lysyl-[protein] + 2 oxidized [2Fe-2S]-[ferredoxin] + 2 S-adenosyl-L-methionine + 4 H(+) = [[Fe-S] cluster scaffold protein] + N(6)-[(R)-dihydrolipoyl]-L-lysyl-[protein] + 4 Fe(3+) + 2 hydrogen sulfide + 2 5'-deoxyadenosine + 2 L-methionine + 2 reduced [2Fe-2S]-[ferredoxin]. It functions in the pathway protein modification; protein lipoylation via endogenous pathway; protein N(6)-(lipoyl)lysine from octanoyl-[acyl-carrier-protein]: step 2/2. Catalyzes the radical-mediated insertion of two sulfur atoms into the C-6 and C-8 positions of the octanoyl moiety bound to the lipoyl domains of lipoate-dependent enzymes, thereby converting the octanoylated domains into lipoylated derivatives. This chain is Lipoyl synthase, found in Erythrobacter litoralis (strain HTCC2594).